A 218-amino-acid chain; its full sequence is Ribose-5-phosphate isomerase A (218 aa).

Residues 28–31 (TGST), 81–84 (DSAD), and 94–97 (KGGG) each bind substrate. The active-site Proton acceptor is glutamate 103. Lysine 121 contacts substrate.

It belongs to the ribose 5-phosphate isomerase family. In terms of assembly, homodimer.

The catalysed reaction is aldehydo-D-ribose 5-phosphate = D-ribulose 5-phosphate. Its pathway is carbohydrate degradation; pentose phosphate pathway; D-ribose 5-phosphate from D-ribulose 5-phosphate (non-oxidative stage): step 1/1. Catalyzes the reversible conversion of ribose-5-phosphate to ribulose 5-phosphate. This chain is Ribose-5-phosphate isomerase A, found in Buchnera aphidicola subsp. Baizongia pistaciae (strain Bp).